A 186-amino-acid polypeptide reads, in one-letter code: CoB--CoM heterodisulfide reductase iron-sulfur subunit C 2 (186 aa).

2 4Fe-4S ferredoxin-type domains span residues 26–56 and 67–99; these read GEDI…AYRT and LDDV…TEII. Cys36, Cys39, Cys42, Cys46, Cys79, Cys82, Cys85, and Cys89 together coordinate [4Fe-4S] cluster.

This sequence belongs to the HdrC family. In terms of assembly, the heterodisulfide reductase is composed of three subunits; HdrA, HdrB and HdrC. The cofactor is [4Fe-4S] cluster.

It functions in the pathway cofactor metabolism; coenzyme M-coenzyme B heterodisulfide reduction; coenzyme B and coenzyme M from coenzyme M-coenzyme B heterodisulfide: step 1/1. Functionally, part of a complex that catalyzes the reversible reduction of CoM-S-S-CoB to the thiol-coenzymes H-S-CoM (coenzyme M) and H-S-CoB (coenzyme B). The protein is CoB--CoM heterodisulfide reductase iron-sulfur subunit C 2 (hdrC2) of Methanocaldococcus jannaschii (strain ATCC 43067 / DSM 2661 / JAL-1 / JCM 10045 / NBRC 100440) (Methanococcus jannaschii).